A 183-amino-acid polypeptide reads, in one-letter code: Holliday junction branch migration complex subunit RuvA (183 aa).

The segment at 1–64 (MVVGIEGIIT…EDSNKFYGFL (64 aa)) is domain I. Positions 65 to 139 (DKDEQKMFEM…DTKTKLENVS (75 aa)) are domain II. Position 139 (serine 139) is a region of interest, flexible linker. Positions 139 to 183 (SDDKSEALAALLTLGFKQEKIISVLASAQATGTSELIKEALKKLG) are domain III.

Belongs to the RuvA family. Homotetramer. Forms an RuvA(8)-RuvB(12)-Holliday junction (HJ) complex. HJ DNA is sandwiched between 2 RuvA tetramers; dsDNA enters through RuvA and exits via RuvB. An RuvB hexamer assembles on each DNA strand where it exits the tetramer. Each RuvB hexamer is contacted by two RuvA subunits (via domain III) on 2 adjacent RuvB subunits; this complex drives branch migration. In the full resolvosome a probable DNA-RuvA(4)-RuvB(12)-RuvC(2) complex forms which resolves the HJ.

The protein localises to the cytoplasm. Functionally, the RuvA-RuvB-RuvC complex processes Holliday junction (HJ) DNA during genetic recombination and DNA repair, while the RuvA-RuvB complex plays an important role in the rescue of blocked DNA replication forks via replication fork reversal (RFR). RuvA specifically binds to HJ cruciform DNA, conferring on it an open structure. The RuvB hexamer acts as an ATP-dependent pump, pulling dsDNA into and through the RuvAB complex. HJ branch migration allows RuvC to scan DNA until it finds its consensus sequence, where it cleaves and resolves the cruciform DNA. The polypeptide is Holliday junction branch migration complex subunit RuvA (Campylobacter jejuni subsp. jejuni serotype O:23/36 (strain 81-176)).